The sequence spans 461 residues: Bifunctional protein GlmU (461 aa).

The segment at 1-229 is pyrophosphorylase; that stretch reads MEKYVVVLAA…FSESLGVNDR (229 aa). UDP-N-acetyl-alpha-D-glucosamine contacts are provided by residues 8-11, Lys-22, Gln-72, and 77-78; these read LAAG and GT. Asp-102 provides a ligand contact to Mg(2+). Positions 139, 154, 169, and 227 each coordinate UDP-N-acetyl-alpha-D-glucosamine. Asn-227 lines the Mg(2+) pocket. The linker stretch occupies residues 230–250; that stretch reads VALAQATKTMQRRINEAHMRD. An N-acetyltransferase region spans residues 251–461; the sequence is GVSFIDPDTA…LPLSKDKDWE (211 aa). Residues Arg-332 and Lys-350 each contribute to the UDP-N-acetyl-alpha-D-glucosamine site. His-362 serves as the catalytic Proton acceptor. 2 residues coordinate UDP-N-acetyl-alpha-D-glucosamine: Tyr-365 and Asn-376. Residues 385–386, Ala-422, and Arg-439 contribute to the acetyl-CoA site; that span reads NY.

In the N-terminal section; belongs to the N-acetylglucosamine-1-phosphate uridyltransferase family. It in the C-terminal section; belongs to the transferase hexapeptide repeat family. Homotrimer. It depends on Mg(2+) as a cofactor.

It is found in the cytoplasm. It carries out the reaction alpha-D-glucosamine 1-phosphate + acetyl-CoA = N-acetyl-alpha-D-glucosamine 1-phosphate + CoA + H(+). It catalyses the reaction N-acetyl-alpha-D-glucosamine 1-phosphate + UTP + H(+) = UDP-N-acetyl-alpha-D-glucosamine + diphosphate. Its pathway is nucleotide-sugar biosynthesis; UDP-N-acetyl-alpha-D-glucosamine biosynthesis; N-acetyl-alpha-D-glucosamine 1-phosphate from alpha-D-glucosamine 6-phosphate (route II): step 2/2. It participates in nucleotide-sugar biosynthesis; UDP-N-acetyl-alpha-D-glucosamine biosynthesis; UDP-N-acetyl-alpha-D-glucosamine from N-acetyl-alpha-D-glucosamine 1-phosphate: step 1/1. It functions in the pathway bacterial outer membrane biogenesis; LPS lipid A biosynthesis. In terms of biological role, catalyzes the last two sequential reactions in the de novo biosynthetic pathway for UDP-N-acetylglucosamine (UDP-GlcNAc). The C-terminal domain catalyzes the transfer of acetyl group from acetyl coenzyme A to glucosamine-1-phosphate (GlcN-1-P) to produce N-acetylglucosamine-1-phosphate (GlcNAc-1-P), which is converted into UDP-GlcNAc by the transfer of uridine 5-monophosphate (from uridine 5-triphosphate), a reaction catalyzed by the N-terminal domain. The protein is Bifunctional protein GlmU of Lactobacillus helveticus (strain DPC 4571).